Consider the following 493-residue polypeptide: Probable mannosyl-oligosaccharide alpha-1,2-mannosidase 1B (493 aa).

A signal peptide spans 1-18 (MHLPSLSVALALVSSSLA). Residues N87 and N174 are each glycosylated (N-linked (GlcNAc...) asparagine). C324 and C353 form a disulfide bridge. The active-site Proton donor is E367. N-linked (GlcNAc...) asparagine glycosylation occurs at N489.

Belongs to the glycosyl hydrolase 47 family. Monomer. The cofactor is Ca(2+). Mg(2+) is required as a cofactor.

Its subcellular location is the cytoplasmic vesicle lumen. It catalyses the reaction N(4)-(alpha-D-Man-(1-&gt;2)-alpha-D-Man-(1-&gt;2)-alpha-D-Man-(1-&gt;3)-[alpha-D-Man-(1-&gt;2)-alpha-D-Man-(1-&gt;3)-[alpha-D-Man-(1-&gt;2)-alpha-D-Man-(1-&gt;6)]-alpha-D-Man-(1-&gt;6)]-beta-D-Man-(1-&gt;4)-beta-D-GlcNAc-(1-&gt;4)-beta-D-GlcNAc)-L-asparaginyl-[protein] (N-glucan mannose isomer 9A1,2,3B1,2,3) + 4 H2O = N(4)-(alpha-D-Man-(1-&gt;3)-[alpha-D-Man-(1-&gt;3)-[alpha-D-Man-(1-&gt;6)]-alpha-D-Man-(1-&gt;6)]-beta-D-Man-(1-&gt;4)-beta-D-GlcNAc-(1-&gt;4)-beta-D-GlcNAc)-L-asparaginyl-[protein] (N-glucan mannose isomer 5A1,2) + 4 beta-D-mannose. The enzyme catalyses N(4)-(alpha-D-Man-(1-&gt;2)-alpha-D-Man-(1-&gt;2)-alpha-D-Man-(1-&gt;3)-[alpha-D-Man-(1-&gt;3)-[alpha-D-Man-(1-&gt;2)-alpha-D-Man-(1-&gt;6)]-alpha-D-Man-(1-&gt;6)]-beta-D-Man-(1-&gt;4)-beta-D-GlcNAc-(1-&gt;4)-beta-D-GlcNAc)-L-asparaginyl-[protein] (N-glucan mannose isomer 8A1,2,3B1,3) + 3 H2O = N(4)-(alpha-D-Man-(1-&gt;3)-[alpha-D-Man-(1-&gt;3)-[alpha-D-Man-(1-&gt;6)]-alpha-D-Man-(1-&gt;6)]-beta-D-Man-(1-&gt;4)-beta-D-GlcNAc-(1-&gt;4)-beta-D-GlcNAc)-L-asparaginyl-[protein] (N-glucan mannose isomer 5A1,2) + 3 beta-D-mannose. It participates in protein modification; protein glycosylation. Involved in the maturation of Asn-linked oligosaccharides. Progressively trims alpha-1,2-linked mannose residues from Man(9)GlcNAc(2) to produce Man(5)GlcNAc(2). The sequence is that of Probable mannosyl-oligosaccharide alpha-1,2-mannosidase 1B (mns1B) from Aspergillus fumigatus (strain CBS 144.89 / FGSC A1163 / CEA10) (Neosartorya fumigata).